Here is a 266-residue protein sequence, read N- to C-terminus: MIYSRSRLPSEGEILIATVKQVFDYGSYVTLDEYGGLQAFLPWSEVSSKWVKNIRDVLKENRKVVVKVIRVDRRKGTVDVSLKKVTDDERRKKNLQWKKIQRLDKILELVSQQLKLSEKDAWEQVAWKLEAKYGDPISAIERAVKEGEKILIDAGVPEIWIKPLLEEAAKHTEEKKVKMSGLITVKTSEPLGVQKIKEVMSKALENIEQDYESILNVKIYTIGAPRYRVDVVGTNPKDASEALNQIISNLIKIGKEENVDISVVKK.

One can recognise an S1 motif domain in the interval 12 to 83; it reads GEILIATVKQ…RKGTVDVSLK (72 aa).

It belongs to the eIF-2-alpha family. Heterotrimer composed of an alpha, a beta and a gamma chain.

EIF-2 functions in the early steps of protein synthesis by forming a ternary complex with GTP and initiator tRNA. This is Translation initiation factor 2 subunit alpha from Saccharolobus islandicus (strain Y.N.15.51 / Yellowstone #2) (Sulfolobus islandicus).